A 519-amino-acid polypeptide reads, in one-letter code: 2-isopropylmalate synthase (519 aa).

A Pyruvate carboxyltransferase domain is found at 5–267; it reads VIIFDTTLRD…QTRINHKEIY (263 aa). Mn(2+) contacts are provided by aspartate 14, histidine 202, histidine 204, and asparagine 238. A regulatory domain region spans residues 392 to 519; the sequence is VMNYFNTQSG…RKHHTTQEAV (128 aa).

It belongs to the alpha-IPM synthase/homocitrate synthase family. LeuA type 1 subfamily. In terms of assembly, homodimer. The cofactor is Mn(2+).

It is found in the cytoplasm. It catalyses the reaction 3-methyl-2-oxobutanoate + acetyl-CoA + H2O = (2S)-2-isopropylmalate + CoA + H(+). It participates in amino-acid biosynthesis; L-leucine biosynthesis; L-leucine from 3-methyl-2-oxobutanoate: step 1/4. Its function is as follows. Catalyzes the condensation of the acetyl group of acetyl-CoA with 3-methyl-2-oxobutanoate (2-ketoisovalerate) to form 3-carboxy-3-hydroxy-4-methylpentanoate (2-isopropylmalate). The chain is 2-isopropylmalate synthase from Proteus mirabilis (strain HI4320).